The primary structure comprises 1486 residues: Chromosome partition protein MukB (1486 aa).

Residue G34–S41 coordinates ATP. 3 coiled-coil regions span residues L326–Q418, L444–Q480, and R509–V603. The flexible hinge stretch occupies residues P666–R783. 3 coiled-coil regions span residues E835 to E923, E977 to A1115, and V1209 to S1266.

The protein belongs to the SMC family. MukB subfamily. Homodimerization via its hinge domain. Binds to DNA via its C-terminal region. Interacts, and probably forms a ternary complex, with MukE and MukF via its C-terminal region. The complex formation is stimulated by calcium or magnesium. Interacts with tubulin-related protein FtsZ.

It is found in the cytoplasm. The protein resides in the nucleoid. Plays a central role in chromosome condensation, segregation and cell cycle progression. Functions as a homodimer, which is essential for chromosome partition. Involved in negative DNA supercoiling in vivo, and by this means organize and compact chromosomes. May achieve or facilitate chromosome segregation by condensation DNA from both sides of a centrally located replisome during cell division. The protein is Chromosome partition protein MukB of Escherichia coli O9:H4 (strain HS).